A 396-amino-acid polypeptide reads, in one-letter code: MLSCYRNCKHFGVCGGCSSPQMEYASSLKTKELALHNLFAPLIPSQNILPVIPCSPLLRGRNKMEFSFYQTVDGEKTLGFISPSKPKKGIPITECLMIDERAMDILNITRSWWTAHPDLSAYYPPLNKGSLCTITVRVGNISNDFMIILTTSGREEFAVPLNIIQEWQQSLLDSGLPITSIFWEEKLSARNSPTTFRTTHLYGAPFLKQQLSIDGRSSLFHIRPRSFFQPQSLQAEKIIQTIKEFIDPCGEETLLDLYCGAGIIGILLAPYVKKIIGVELVPDAVASAQENIQLNSVDMEVFLEDAKQFCKRNENLPSPDIVVIDPPRCGMQNRALKYLLRMAPKKIVYVSCNPLTQIQECSVLVEQGYQLRRMQPIDQFPHTNHLENIVLLERLS.

[4Fe-4S] cluster is bound by residues cysteine 8, cysteine 14, cysteine 17, and cysteine 95. 4 residues coordinate S-adenosyl-L-methionine: glutamine 229, tyrosine 258, glutamate 279, and aspartate 325. Cysteine 352 (nucleophile) is an active-site residue.

Belongs to the class I-like SAM-binding methyltransferase superfamily. RNA M5U methyltransferase family.

This is an uncharacterized protein from Chlamydia trachomatis serovar D (strain ATCC VR-885 / DSM 19411 / UW-3/Cx).